Consider the following 101-residue polypeptide: Conopressin/conophysin, isoform 3 (101 aa).

A signal peptide is located at residue Ala1. A disulfide bond links Cys2 and Cys7. Gly10 is subject to Glycine amide. A propeptide spanning residues 11–18 is cleaved from the precursor; the sequence is GKRNVDEG. Disulfide bonds link Cys23/Cys63, Cys26/Cys37, Cys31/Cys53, Cys38/Cys43, Cys70/Cys88, Cys82/Cys100, and Cys89/Cys94.

The protein belongs to the vasopressin/oxytocin family. Expressed by the venom gland.

It is found in the secreted. Targets vasopressin-oxytocin related receptors. Is more active on fish receptors than on their human counterparts, supporting an evolved role of this conopressin in the envenomation process. Acts as an agonist on zebrafish vasopressin receptors V1a1R (EC(50)=10.6 nM), V1a2R (EC(50)=44.06 nM, partial agonist), V2R (EC(50)=299.2 nM) and oxytocin receptor (EC(50)=353.73 nM, partial agonist). Shows a weaker activity on human receptors AVPR1B (EC(50)=51.92 nM), AVPR1A (EC(50)=123.78 nM), AVPR2 (EC(50)=299.2 nM) and oxytocin (OXTR) receptor (EC(50)=455.66 nM, partial agonist). In vivo, exhibits grooming and scratching behavior in mice, following intracerebral injection. In Conus monile (Necklace cone), this protein is Conopressin/conophysin, isoform 3.